The following is a 361-amino-acid chain: Phosphoserine aminotransferase (361 aa).

Arg-42 is an L-glutamate binding site. Residues 76–77 (AR), Trp-102, Thr-153, Asp-173, and Gln-196 contribute to the pyridoxal 5'-phosphate site. Lys-197 is subject to N6-(pyridoxal phosphate)lysine. 238-239 (NT) is a binding site for pyridoxal 5'-phosphate.

The protein belongs to the class-V pyridoxal-phosphate-dependent aminotransferase family. SerC subfamily. Homodimer. The cofactor is pyridoxal 5'-phosphate.

The protein resides in the cytoplasm. It carries out the reaction O-phospho-L-serine + 2-oxoglutarate = 3-phosphooxypyruvate + L-glutamate. The catalysed reaction is 4-(phosphooxy)-L-threonine + 2-oxoglutarate = (R)-3-hydroxy-2-oxo-4-phosphooxybutanoate + L-glutamate. It participates in amino-acid biosynthesis; L-serine biosynthesis; L-serine from 3-phospho-D-glycerate: step 2/3. The protein operates within cofactor biosynthesis; pyridoxine 5'-phosphate biosynthesis; pyridoxine 5'-phosphate from D-erythrose 4-phosphate: step 3/5. Functionally, catalyzes the reversible conversion of 3-phosphohydroxypyruvate to phosphoserine and of 3-hydroxy-2-oxo-4-phosphonooxybutanoate to phosphohydroxythreonine. The chain is Phosphoserine aminotransferase from Mannheimia succiniciproducens (strain KCTC 0769BP / MBEL55E).